The sequence spans 581 residues: Activating signal cointegrator 1 (581 aa).

An N-acetylalanine modification is found at Ala2. Residues 100 to 121 form a disordered region; it reads DQLKRSRRKGRNKQEVPAFPEP. The segment at 167–219 adopts a C4-type zinc-finger fold; the sequence is GRHPCDCLGQKHKLINNCLVCGRIVCEQEGSGPCLFCGSLVCTNEEQDILQRD. Residues 200–300 are mediates interaction with DDRGK1; it reads CLFCGSLVCT…ASDSNQWLSK (101 aa). Ser276 is modified (phosphoserine). Tyr289 is modified (phosphotyrosine). The tract at residues 300–400 is mediates interaction with UFL1; it reads KVEREMLQKR…WVDNTGSTPQ (101 aa). Residues Lys324 and Lys334 each participate in a glycyl lysine isopeptide (Lys-Gly) (interchain with G-Cter in UFM1) cross-link. A compositionally biased stretch (polar residues) spans 390–406; that stretch reads QWVDNTGSTPQKKTSLS. Residues 390 to 410 are disordered; it reads QWVDNTGSTPQKKTSLSAGPR. The 95-residue stretch at 437–531 folds into the ASCH domain; it reads LSMHQPWASL…FQEQFPDISQ (95 aa).

In terms of assembly, interacts with the thyroid hormone receptor/TR (via the ligand-binding domain); this interaction requires the presence of thyroid hormone. Interacts with the androgen receptor/AR; in an androgen, testosterone and dihydrotestosterone-dependent manner. Interacts with ESR1 (estrogen ligand-bound); competes with UFSP2. Interacts with UFSP2; competes with ligand-bound ESR1. Interacts with DDRGK1 and UFL1; the interaction with DDRGK1 is direct. Interacts with NCOA1. Interacts with EP300. Part of the ASC-1 complex, that contains TRIP4, ASCC1, ASCC2 and ASCC3. Identified in the RQT (ribosome quality control trigger) complex, that contains ASCC2, ASCC3 and TRIP4. Interacts with NEK6. Interacts with CSRP1. Interacts with ZCCHC4. Phosphorylated by NEK6. In terms of processing, polyufmylated by the UFM1-conjugating system composed of the enzymes UBA5, UFC1 and UFL1. Deufmylated by the protease UFSP2. Ufmylation of TRIP4 is promoted by ligand-bound nuclear receptors that compete with UFSP2 for interaction with TRIP4. Nuclear receptors-induced ufmylation promotes the recruitment of additional transcriptional coactivators like EP300 and NCOA1 and therefore the assembly of a coactivator complex facilitating nuclear receptor-mediated transcription. Ubiquitously expressed. Expressed in the spinal cord, brain, paraspinal ganglia, thyroid, and submandibular glands. Expressed at low level in all the muscles (at protein level) but with higher expression in axial than in limb muscles.

The protein localises to the nucleus. It localises to the cytoplasm. Its subcellular location is the cytosol. It is found in the cytoskeleton. The protein resides in the microtubule organizing center. The protein localises to the centrosome. Its function is as follows. Transcription coactivator which associates with nuclear receptors, transcriptional coactivators including EP300, CREBBP and NCOA1, and basal transcription factors like TBP and TFIIA to facilitate nuclear receptors-mediated transcription. May thereby play an important role in establishing distinct coactivator complexes under different cellular conditions. Plays a role in thyroid hormone receptor and estrogen receptor transactivation. Also involved in androgen receptor transactivation. Plays a pivotal role in the transactivation of NF-kappa-B, SRF and AP1. Acts as a mediator of transrepression between nuclear receptor and either AP1 or NF-kappa-B. May play a role in the development of neuromuscular junction. May play a role in late myogenic differentiation. Also functions as part of the RQC trigger (RQT) complex that activates the ribosome quality control (RQC) pathway, a pathway that degrades nascent peptide chains during problematic translation. In Mus musculus (Mouse), this protein is Activating signal cointegrator 1.